The sequence spans 661 residues: MDENAIRAAIFIQKWYRRHQARREMQRRCNWQIFQNLEYASEQDQAELYKFFNDLIKHMPQAAGRKNQYQGSAHVSVLDDKDDLVEEFGDIVNAKIELPIRKNHIDLLIDVFRKKRGNRLHPKYVALILREAAKSLKQLPNISPVSTAVSQQVTVCGDLHGKLDDLLVVLHKNGLPSSSNPYVFNGDFVDRGKRGLEVLLLLLSLYLAFPNAVFLNRGNHEDSVMNARYGFIREVESKYPRNHKRILAFIDEVYRWLPLGSVLNSRVLIVHGGFSDSTSLDLIKSIDRGKYVSILRPPLTDGEPLDKTEWQQIFDIMWSDPQATMGCVPNTLRGAGVWFGPDVTDNFLQRHRLSYVIRSHECKPNGHEFMHDNKIITIFSASNYYAIGSNKGAYIRLNNQLMPHFVQYISAASQTKRLSFKQRMGIVESSALKELAVRMRDHRDELEDEFRKYDPKDSGYISISHWCKVMENVTKLGLPWRLLRDKLAPGTDSQKVNYNRTLDLLDTDVILEAEADGMSVMDALYANKASLVAIFNIIDADNSGEITLDEFETAIDLLVAHMPGAYSKAEMLEKCRMMDLNGDGKVDLNEFLEAFRLSDLHRKEQQDENIRRRSTGRPSVAKTATDPVTLLADKISKNTLVVEHDIDPTDCESKVIDPKKS.

Residues 7 to 32 (RAAIFIQKWYRRHQARREMQRRCNWQ) form the IQ domain. The tract at residues 105–413 (IDLLIDVFRK…HFVQYISAAS (309 aa)) is catalytic. Mn(2+)-binding residues include aspartate 158, histidine 160, aspartate 187, and asparagine 219. Catalysis depends on histidine 220, which acts as the Proton donor. 2 residues coordinate Mn(2+): histidine 271 and histidine 360. EF-hand domains follow at residues 441–476 (DHRD…VTKL), 526–561 (ANKA…LVAH), and 566–601 (YSKA…SDLH). Aspartate 539, aspartate 541, serine 543, glutamate 545, glutamate 550, aspartate 579, asparagine 581, aspartate 583, lysine 585, and glutamate 590 together coordinate Ca(2+). A disordered region spans residues 606 to 625 (QDENIRRRSTGRPSVAKTAT).

The protein belongs to the PPP phosphatase family. Requires Mn(2+) as cofactor. Expressed in the visual system of the fly, as well as in the mushroom bodies of the central brain.

It carries out the reaction O-phospho-L-seryl-[protein] + H2O = L-seryl-[protein] + phosphate. The catalysed reaction is O-phospho-L-threonyl-[protein] + H2O = L-threonyl-[protein] + phosphate. Its function is as follows. Phosphatase required to prevent light-induced retinal degeneration. The sequence is that of Serine/threonine-protein phosphatase rdgC (rdgC) from Drosophila melanogaster (Fruit fly).